We begin with the raw amino-acid sequence, 303 residues long: Tyrosine recombinase XerC (303 aa).

In terms of domain architecture, Core-binding (CB) spans 1 to 85 (MRADLDAFLE…ATRGLYQYLL (85 aa)). In terms of domain architecture, Tyr recombinase spans 106-285 (KLPRTLDADR…DFQHLASVYD (180 aa)). Catalysis depends on residues Arg-146, Lys-170, His-237, Arg-240, and His-263. Tyr-272 acts as the O-(3'-phospho-DNA)-tyrosine intermediate in catalysis.

It belongs to the 'phage' integrase family. XerC subfamily. Forms a cyclic heterotetrameric complex composed of two molecules of XerC and two molecules of XerD.

It localises to the cytoplasm. Its function is as follows. Site-specific tyrosine recombinase, which acts by catalyzing the cutting and rejoining of the recombining DNA molecules. The XerC-XerD complex is essential to convert dimers of the bacterial chromosome into monomers to permit their segregation at cell division. It also contributes to the segregational stability of plasmids. In Pseudomonas aeruginosa (strain LESB58), this protein is Tyrosine recombinase XerC.